A 339-amino-acid chain; its full sequence is Photosystem II assembly lipoprotein Ycf48 (339 aa).

A signal peptide spans 1–23 (MNRLIKFSFNLILIFVLGLGLSG). Cysteine 24 carries the N-palmitoyl cysteine lipid modification. The S-diacylglycerol cysteine moiety is linked to residue cysteine 24.

This sequence belongs to the Ycf48 family. Part of early PSII assembly complexes which includes D1 (psbA) and PsbI; not found in mature PSII. Binds to the lumenal side of PSII complexes. Interacts with YidC.

The protein resides in the cellular thylakoid membrane. In terms of biological role, a factor required for optimal assembly of photosystem II (PSII), acting in the early stages of PSII assembly. Also plays a role in replacement of photodamaged D1 (psbA). Assists YidC in synthesis of chlorophyll-binding proteins. This chain is Photosystem II assembly lipoprotein Ycf48, found in Prochlorococcus marinus (strain SARG / CCMP1375 / SS120).